The following is a 955-amino-acid chain: Mediator of RNA polymerase II transcription subunit 16 (955 aa).

It belongs to the Mediator complex subunit 16 family. As to quaternary structure, component of the Mediator complex.

It is found in the nucleus. Functionally, component of the Mediator complex, a coactivator involved in the regulated transcription of nearly all RNA polymerase II-dependent genes. Mediator functions as a bridge to convey information from gene-specific regulatory proteins to the basal RNA polymerase II transcription machinery. Mediator is recruited to promoters by direct interactions with regulatory proteins and serves as a scaffold for the assembly of a functional preinitiation complex with RNA polymerase II and the general transcription factors. The protein is Mediator of RNA polymerase II transcription subunit 16 (sin4) of Neosartorya fischeri (strain ATCC 1020 / DSM 3700 / CBS 544.65 / FGSC A1164 / JCM 1740 / NRRL 181 / WB 181) (Aspergillus fischerianus).